Reading from the N-terminus, the 122-residue chain is Small ribosomal subunit protein uS13 (122 aa).

Residues 99–122 (RGQRTHTNARTRKGPAKAIAGKKK) form a disordered region.

This sequence belongs to the universal ribosomal protein uS13 family. Part of the 30S ribosomal subunit. Forms a loose heterodimer with protein S19. Forms two bridges to the 50S subunit in the 70S ribosome.

In terms of biological role, located at the top of the head of the 30S subunit, it contacts several helices of the 16S rRNA. In the 70S ribosome it contacts the 23S rRNA (bridge B1a) and protein L5 of the 50S subunit (bridge B1b), connecting the 2 subunits; these bridges are implicated in subunit movement. Contacts the tRNAs in the A and P-sites. This is Small ribosomal subunit protein uS13 from Rhodopseudomonas palustris (strain HaA2).